Here is a 159-residue protein sequence, read N- to C-terminus: 17.9 kDa class II heat shock protein (159 aa).

Residues 43 to 157 (DAKAMAATPA…PKKPRTIQVK (115 aa)) form the sHSP domain.

It belongs to the small heat shock protein (HSP20) family.

The protein localises to the cytoplasm. This is 17.9 kDa class II heat shock protein (HSP17.9-D) from Glycine max (Soybean).